A 151-amino-acid chain; its full sequence is Aspartate carbamoyltransferase regulatory chain (151 aa).

Residues C107, C112, C135, and C138 each coordinate Zn(2+).

The protein belongs to the PyrI family. Contains catalytic and regulatory chains. It depends on Zn(2+) as a cofactor.

Its function is as follows. Involved in allosteric regulation of aspartate carbamoyltransferase. This is Aspartate carbamoyltransferase regulatory chain from Thermococcus gammatolerans (strain DSM 15229 / JCM 11827 / EJ3).